A 283-amino-acid chain; its full sequence is NAD kinase (283 aa).

Asp68 serves as the catalytic Proton acceptor. Residues Asp68–Gly69, Asn142–Asp143, Arg153, Asp172, Thr183–Ser188, and Gln242 each bind NAD(+).

Belongs to the NAD kinase family. A divalent metal cation serves as cofactor.

It localises to the cytoplasm. The enzyme catalyses NAD(+) + ATP = ADP + NADP(+) + H(+). Its function is as follows. Involved in the regulation of the intracellular balance of NAD and NADP, and is a key enzyme in the biosynthesis of NADP. Catalyzes specifically the phosphorylation on 2'-hydroxyl of the adenosine moiety of NAD to yield NADP. This Caldanaerobacter subterraneus subsp. tengcongensis (strain DSM 15242 / JCM 11007 / NBRC 100824 / MB4) (Thermoanaerobacter tengcongensis) protein is NAD kinase.